The following is a 367-amino-acid chain: Uroporphyrinogen decarboxylase (367 aa).

Substrate-binding positions include 28–32 (RQAGR), aspartate 78, tyrosine 158, threonine 213, and histidine 334.

Belongs to the uroporphyrinogen decarboxylase family. As to quaternary structure, homodimer.

The protein resides in the cytoplasm. It catalyses the reaction uroporphyrinogen III + 4 H(+) = coproporphyrinogen III + 4 CO2. It functions in the pathway porphyrin-containing compound metabolism; protoporphyrin-IX biosynthesis; coproporphyrinogen-III from 5-aminolevulinate: step 4/4. Catalyzes the decarboxylation of four acetate groups of uroporphyrinogen-III to yield coproporphyrinogen-III. The polypeptide is Uroporphyrinogen decarboxylase (Ralstonia pickettii (strain 12J)).